The chain runs to 256 residues: UPF0246 protein Sbal_1048 (256 aa).

The protein belongs to the UPF0246 family.

This is UPF0246 protein Sbal_1048 from Shewanella baltica (strain OS155 / ATCC BAA-1091).